The following is a 125-amino-acid chain: Lymphocyte antigen 6 complex locus protein G6c (125 aa).

Residues 1 to 18 (MKALMLLTLSVLLCWVSA) form the signal peptide. One can recognise a UPAR/Ly6 domain in the interval 20–111 (IRCHSCYKVP…PRPTPALGLV (92 aa)). Disulfide bonds link Cys22/Cys47, Cys25/Cys33, and Cys39/Cys65. N-linked (GlcNAc...) asparagine glycosylation occurs at Asn88. Cys92 and Cys97 are oxidised to a cystine. A lipid anchor (GPI-anchor amidated serine) is attached at Ser99. Positions 100–125 (AGPRPTPALGLVFLTSLAGLGLWLLH) are cleaved as a propeptide — removed in mature form.

In terms of assembly, monomer. In terms of processing, N-glycosylated. As to expression, highly expressed at the leading edges of cells, on filopodia.

Its subcellular location is the cell membrane. The protein is Lymphocyte antigen 6 complex locus protein G6c (LY6G6C) of Homo sapiens (Human).